Consider the following 1198-residue polypeptide: Spindle-defective protein 5 (1198 aa).

Positions 1–10 (MEDNSVLNED) are enriched in polar residues. The interval 1 to 45 (MEDNSVLNEDSNLEHVEGQPRRSMSQPVLNVEGDKRTSSTSATQQ) is disordered. Coiled-coil stretches lie at residues 67–381 (EENK…QLTG), 566–603 (HDVA…FEEI), 694–916 (KFTS…LSTS), 983–1035 (DELC…ENVP), and 1127–1175 (KNET…EFQD).

The protein localises to the cytoplasm. It is found in the cytoskeleton. The protein resides in the microtubule organizing center. It localises to the centrosome. Its function is as follows. Plays a central role in centrosome maturation and mitotic spindle assembly during the first division of the zygote. Required for the centrosomal localization of air-1 and zyg-9. Probably not required in late embryogenesis and during larval development. The protein is Spindle-defective protein 5 (spd-5) of Caenorhabditis elegans.